The chain runs to 285 residues: Transcription factor JAMYB (285 aa).

HTH myb-type domains are found at residues 26–78 and 79–133; these read SAEL…LNYL and RPDV…QKHA. 2 consecutive DNA-binding regions (H-T-H motif) follow at residues 54–78 and 106–129; these read WNAL…LNYL and WSKI…RTRV.

Its subcellular location is the nucleus. Probable transcription factor that may be involved in the jasmonate-dependent defense responses to the rice blast fungus Magnaporthe oryzae. Does not seem to function in the salicylic acid-dependent signaling pathway. The chain is Transcription factor JAMYB from Oryza sativa subsp. japonica (Rice).